The sequence spans 394 residues: Aspergillopepsin-1 (394 aa).

The first 20 residues, 1-20, serve as a signal peptide directing secretion; the sequence is MVVFSKTAALVLGLSTAVSA. Residues 21-69 constitute a propeptide, activation peptide; sequence APAPTRKGFTINQIARPANKTRTVNLPGLYARSLAKFGGTVPQSVKEAA. The region spanning 85–391 is the Peptidase A1 domain; sequence YLTPVTVGKS…NSEGPKLGFA (307 aa). The active site involves Asp-101. O-linked (Man...) serine glycosylation is found at Ser-129 and Ser-304. Cys-319 and Cys-354 are oxidised to a cystine.

The protein belongs to the peptidase A1 family. As to quaternary structure, monomer.

The protein localises to the secreted. The catalysed reaction is Hydrolysis of proteins with broad specificity. Generally favors hydrophobic residues in P1 and P1', but also accepts Lys in P1, which leads to activation of trypsinogen. Does not clot milk.. Its function is as follows. Secreted aspartic endopeptidase that allows assimilation of proteinaceous substrates. The scissile peptide bond is attacked by a nucleophilic water molecule activated by two aspartic residues in the active site. Shows a broad primary substrate specificity. Favors hydrophobic residues at the P1 and P1' positions, but also accepts a lysine residue in the P1 position, leading to the activation of trypsinogen and chymotrypsinogen A. This chain is Aspergillopepsin-1 (pepA), found in Aspergillus phoenicis (Aspergillus saitoi).